Here is a 225-residue protein sequence, read N- to C-terminus: 2-C-methyl-D-erythritol 4-phosphate cytidylyltransferase (225 aa).

It belongs to the IspD/TarI cytidylyltransferase family. IspD subfamily.

The enzyme catalyses 2-C-methyl-D-erythritol 4-phosphate + CTP + H(+) = 4-CDP-2-C-methyl-D-erythritol + diphosphate. It functions in the pathway isoprenoid biosynthesis; isopentenyl diphosphate biosynthesis via DXP pathway; isopentenyl diphosphate from 1-deoxy-D-xylulose 5-phosphate: step 2/6. Functionally, catalyzes the formation of 4-diphosphocytidyl-2-C-methyl-D-erythritol from CTP and 2-C-methyl-D-erythritol 4-phosphate (MEP). The chain is 2-C-methyl-D-erythritol 4-phosphate cytidylyltransferase from Haemophilus influenzae (strain PittEE).